The following is a 549-amino-acid chain: Protein X92 (549 aa).

The sequence is that of Protein X92 from Trypanosoma brucei brucei.